The following is a 244-amino-acid chain: 5-oxoprolinase subunit A (244 aa).

Belongs to the LamB/PxpA family. In terms of assembly, forms a complex composed of PxpA, PxpB and PxpC.

The catalysed reaction is 5-oxo-L-proline + ATP + 2 H2O = L-glutamate + ADP + phosphate + H(+). Catalyzes the cleavage of 5-oxoproline to form L-glutamate coupled to the hydrolysis of ATP to ADP and inorganic phosphate. This is 5-oxoprolinase subunit A from Salmonella choleraesuis (strain SC-B67).